The primary structure comprises 743 residues: Dolichyl-phosphooligosaccharide-protein glycotransferase 2 (743 aa).

Topologically, residues 1–7 are cytoplasmic; sequence MKIDKRL. Residues 8 to 28 form a helical membrane-spanning segment; the sequence is MVIVAIATLFRMIPFRLKYLV. Residues 29–31 carry the DXD motif 1 motif; sequence GSD. Topologically, residues 29 to 91 are extracellular; the sequence is GSDPYFHLAY…FSFLGISLYT (63 aa). Residue Asp-31 coordinates Mn(2+). The chain crosses the membrane as a helical span at residues 92–112; that stretch reads AFRVTPVIFGVLTVVFFYLSL. Over 113 to 119 the chain is Cytoplasmic; sequence KKLYNRD. Residues 120 to 140 traverse the membrane as a helical segment; that stretch reads VAFIVGLFLGVNYGHIFRSMA. Topologically, residues 141-144 are extracellular; sequence NYYR. 2 residues coordinate Mn(2+): Arg-144 and Asp-146. The DXD motif 2 motif lies at 144-146; the sequence is RGD. A helical transmembrane segment spans residues 145-165; it reads GDNYMLFWYSVALLGIALGLK. The Cytoplasmic portion of the chain corresponds to 166 to 170; the sequence is TRSKY. The next 2 helical transmembrane spans lie at 171-191 and 192-212; these read RYLFYLLPGIATGFASAFWQA and YYPIFVFVLAGGLLLGVYAYL. The Cytoplasmic portion of the chain corresponds to 213–216; that stretch reads KSPK. The helical transmembrane segment at 217-237 threads the bilayer; sequence LFLDSILIVLSTGLGVLIANI. Residues 238-272 are Extracellular-facing; the sequence is LGDKVGYGMLGYTDWMGKKVAETFGLEFGFIKDAY. A helical transmembrane segment spans residues 273-293; that stretch reads LLIHVKYLLPLSLVFLGFLII. Topologically, residues 294 to 302 are cytoplasmic; sequence TKKLNPKIK. The chain crosses the membrane as a helical span at residues 303 to 323; that stretch reads VGVLVGGSILAFIVMLVKFPA. The Extracellular segment spans residues 324–345; that stretch reads LKDLSTGFGTFREVPISETLPP. The TIXE motif signature appears at 333 to 336; that stretch reads TFRE. A helical membrane pass occupies residues 346–366; it reads TLDDLWRAYNIAIFLAALYIL. Residues 367–373 lie on the Cytoplasmic side of the membrane; that stretch reads RLRKIRS. Residues 374–391 traverse the membrane as a helical segment; the sequence is GDAILLGYVITSLWMLRY. Over 392-394 the chain is Extracellular; sequence WTR. Arg-394 serves as a coordination point for a glycophospholipid. Residues 395–415 traverse the membrane as a helical segment; it reads FLFTAAPAVAFLSGIGVYELT. Over 416–424 the chain is Cytoplasmic; it reads RRIKENKIR. The chain crosses the membrane as a helical span at residues 425–445; the sequence is ITSLGVVILLSSAFSLGEVYS. Over 446-743 the chain is Extracellular; that stretch reads VKPFMNENWE…LDRGIVRVKN (298 aa). Residues 474–476 form an interacts with target acceptor peptide in protein substrate region; the sequence is WWD. The WWDYG motif signature appears at 474 to 478; the sequence is WWDWG. The DK motif signature appears at 526-533; it reads DILKFEAI.

This sequence belongs to the STT3 family. The cofactor is Mn(2+). Requires Mg(2+) as cofactor.

It localises to the cell membrane. It carries out the reaction an archaeal dolichyl phosphooligosaccharide + [protein]-L-asparagine = an archaeal dolichyl phosphate + a glycoprotein with the oligosaccharide chain attached by N-beta-D-glycosyl linkage to a protein L-asparagine.. It functions in the pathway protein modification; protein glycosylation. Its function is as follows. Oligosaccharyl transferase (OST) that catalyzes the initial transfer of a defined glycan (ManNAcXyl(2)GlcAMan(2)GalNAc in P.furiosus) from the lipid carrier dolichol-monophosphate to an asparagine residue within an Asn-X-Ser/Thr consensus motif in nascent polypeptide chains, the first step in protein N-glycosylation. This Pyrococcus furiosus (strain ATCC 43587 / DSM 3638 / JCM 8422 / Vc1) protein is Dolichyl-phosphooligosaccharide-protein glycotransferase 2 (aglB2).